The following is a 131-amino-acid chain: Leptin receptor gene-related protein (131 aa).

The next 4 helical transmembrane spans lie at 7–27 (LVAL…GCAL), 32–52 (VYWP…HFIA), 69–89 (LAYF…VILA), and 100–120 (GLVL…FLVF).

This sequence belongs to the OB-RGRP/VPS55 family. As to quaternary structure, interacts with LEPR. Interacts with RAB13.

Its subcellular location is the golgi apparatus membrane. The protein resides in the endosome membrane. Functionally, negatively regulates leptin receptor (LEPR) cell surface expression, and thus decreases response to leptin/LEP. Negatively regulates growth hormone (GH) receptor cell surface expression in liver. May play a role in liver resistance to GH during periods of reduced nutrient availability. This Sus scrofa (Pig) protein is Leptin receptor gene-related protein (LEPROT).